We begin with the raw amino-acid sequence, 396 residues long: Probable sugar efflux transporter (396 aa).

12 helical membrane passes run 15–35 (VVTLAIAAFIFNTTEFVPVGL), 50–70 (VGIMLTIYAWVVAVMSLPFML), 81–101 (LICLFVLFIASHVLSFLAWNF), 103–123 (VLVISRIGIAFTHAIFWSITA), 136–156 (AQALSLIATGTALAMVLGLPI), 169–189 (TFFAIGMGALITLICLIKLLP), 209–229 (PALMSLYLLTAVVVTAHYTAY), 246–266 (FATVLLLILGGAGIIGSLVFG), 275–295 (LLVSIAISLLVVCLLLLLPAA), 301–321 (LALLSIFWGIAIMVIGLGMQV), 333–353 (VAMALFSGIFNIGIGAGALAG), and 364–384 (TIGYIGAVPACAALVWAVLIF).

It belongs to the major facilitator superfamily. SotB (TC 2.A.1.2) family.

The protein resides in the cell inner membrane. Its function is as follows. Involved in the efflux of sugars. The physiological role may be the reduction of the intracellular concentration of toxic sugars or sugar metabolites. The polypeptide is Probable sugar efflux transporter (Salmonella arizonae (strain ATCC BAA-731 / CDC346-86 / RSK2980)).